The following is a 514-amino-acid chain: Cytochrome P450 monooxygenase nodJ (514 aa).

A helical transmembrane segment spans residues E2–A24. N-linked (GlcNAc...) asparagine glycans are attached at residues N144, N245, and N416. C432 provides a ligand contact to heme.

The protein belongs to the cytochrome P450 family. Heme is required as a cofactor.

It is found in the membrane. It participates in secondary metabolite biosynthesis. Cytochrome P450 monooxygenase; part of the gene cluster that mediates the biosynthesis of the indole diterpenes nodulisporic acids (NA). Nodulisporic acid A (NAA) and its chemically modified derivatives are of particular significance because of their highly potent insecticidal activity against blood-feeding arthropods and lack of observable adverse effects on mammals, in particular the tremogenicity associated with the paspaline-derived IDTs is not observed. The geranylgeranyl diphosphate (GGPP) synthase ggs1, localized outside of the cluster, is proposed to catalyze the first step in nodulisporic acid biosynthesis via conversion of farnesyl pyrophosphate and isopentyl pyrophosphate into geranylgeranyl pyrophosphate (GGPP). Condensation of indole-3-glycerol phosphate with GGPP by the prenyl transferase nodC then forms 3-geranylgeranylindole (3-GGI). Epoxidation by the FAD-dependent monooxygenase nodM leads to a single-epoxidized-GGI that is substrate of the terpene cyclase nodB for cyclization to yield emindole SB. The terminal methyl carbon, C28, of emindole SB is then oxidized by the cytochrome P450 monooxygenase nodW to produce nodulisporic acid F (NAF), the pentacyclic core of NAA. NAF is converted to nodulisporic acid E (NAE) via prenylation. This step is probably performed by one of the indole diterpene prenyltransferases nodD1 or nodD2. Several oxidation steps performed by the FAD-linked oxidoreductase nodO and one of the cytochrome P450 monooxygenase nodR, nodX or nodZ further convert NAE to nodulisporic acid D (NAD). NAD is substrate of cytochrome P450 monooxygenase nodJ to produce the precursor of nodulisporic acid C (NAC), converted to NAC by one of the indole diterpene prenyltransferases nodD1 or nodD2. The FAD-dependent monooxygenase nodY2 then oxidizes NAC to nodulisporic acid B (NAB). Finally NAB is converted to NAA by one of the cytochrome P450 monooxygenases nodR, nodX or nodZ. The chain is Cytochrome P450 monooxygenase nodJ from Hypoxylon pulicicidum.